Reading from the N-terminus, the 253-residue chain is MEMKQISETTLKITISMDDLEERGMELKDFLIPQEKTEEFFYSVMDELDLPDNFKDSGMLSFRVTPRKDRLDVFVTKSEINKDINLEDLAEFGDMSQMTPEDFFKSLEQSMREKGDVKAHEKLEKIEEIMEDVVEATLANQSEAADPSTNHESEPLDYVHYVLDFSTITEAVAFAKTIDFSIEASELYKGSNCYHMTILLDVQQQPSYFANVMYARLIEHANPGSKTRAYLQEHGLQLMLDGAVEQLQKIELG.

This sequence belongs to the MecA family. Homodimer.

Enables the recognition and targeting of unfolded and aggregated proteins to the ClpC protease or to other proteins involved in proteolysis. This Streptococcus pyogenes serotype M18 (strain MGAS8232) protein is Adapter protein MecA.